The following is a 231-amino-acid chain: Phosphoribosylformylglycinamidine synthase subunit PurQ (231 aa).

The region spanning 3-231 (FGVLIFPGSN…ESMVGAMAKR (229 aa)) is the Glutamine amidotransferase type-1 domain. The active-site Nucleophile is cysteine 86. Catalysis depends on residues histidine 203 and glutamate 205.

As to quaternary structure, part of the FGAM synthase complex composed of 1 PurL, 1 PurQ and 2 PurS subunits.

The protein resides in the cytoplasm. It carries out the reaction N(2)-formyl-N(1)-(5-phospho-beta-D-ribosyl)glycinamide + L-glutamine + ATP + H2O = 2-formamido-N(1)-(5-O-phospho-beta-D-ribosyl)acetamidine + L-glutamate + ADP + phosphate + H(+). The enzyme catalyses L-glutamine + H2O = L-glutamate + NH4(+). The protein operates within purine metabolism; IMP biosynthesis via de novo pathway; 5-amino-1-(5-phospho-D-ribosyl)imidazole from N(2)-formyl-N(1)-(5-phospho-D-ribosyl)glycinamide: step 1/2. Functionally, part of the phosphoribosylformylglycinamidine synthase complex involved in the purines biosynthetic pathway. Catalyzes the ATP-dependent conversion of formylglycinamide ribonucleotide (FGAR) and glutamine to yield formylglycinamidine ribonucleotide (FGAM) and glutamate. The FGAM synthase complex is composed of three subunits. PurQ produces an ammonia molecule by converting glutamine to glutamate. PurL transfers the ammonia molecule to FGAR to form FGAM in an ATP-dependent manner. PurS interacts with PurQ and PurL and is thought to assist in the transfer of the ammonia molecule from PurQ to PurL. The protein is Phosphoribosylformylglycinamidine synthase subunit PurQ of Koribacter versatilis (strain Ellin345).